The sequence spans 528 residues: Tyrosine--tRNA ligase, cytoplasmic (528 aa).

M1 is subject to N-acetylmethionine. At G2 the chain carries N-acetylglycine; in Tyrosine--tRNA ligase, cytoplasmic, N-terminally processed. L-tyrosine is bound at residue Y39. Y39 is a binding site for trans-resveratrol. Positions 44-52 (TTGKPHVAY) match the 'HIGH' region motif. Residues Y166, Q170, D173, and Q188 each coordinate L-tyrosine. Trans-resveratrol is bound by residues Q170 and D173. Residue K197 is modified to N6-acetyllysine. The residue at position 205 (S205) is a Phosphoserine. The residue at position 206 (K206) is an N6-acetyllysine. The short motif at 222 to 226 (KMSSS) is the 'KMSKS' region element. The short motif at 242–247 (KKKLKK) is the Nuclear localization signal element. Residues 339-363 (AAYPDPSKQKPPAKGPAKNSEPEEV) form a disordered region. In terms of domain architecture, tRNA-binding spans 364–468 (IPSRLDIRVG…AGSAPGERVF (105 aa)). S386 bears the Phosphoserine mark. Residues K474, K482, and K490 each carry the N6-acetyllysine modification.

This sequence belongs to the class-I aminoacyl-tRNA synthetase family. In terms of assembly, homodimer. Interacts (when binding to resveratrol) with PARP1; interaction stimulates the poly-ADP-ribosyltransferase activity of PARP1.

Its subcellular location is the cytoplasm. It is found in the nucleus. It catalyses the reaction tRNA(Tyr) + L-tyrosine + ATP = L-tyrosyl-tRNA(Tyr) + AMP + diphosphate + H(+). With respect to regulation, resveratrol strongly inhibits the tyrosine--tRNA ligase activity. Functionally, tyrosine--tRNA ligase that catalyzes the attachment of tyrosine to tRNA(Tyr) in a two-step reaction: tyrosine is first activated by ATP to form Tyr-AMP and then transferred to the acceptor end of tRNA(Tyr). Also acts as a positive regulator of poly-ADP-ribosylation in the nucleus, independently of its tyrosine--tRNA ligase activity. Activity is switched upon resveratrol-binding: resveratrol strongly inhibits the tyrosine--tRNA ligase activity and promotes relocalization to the nucleus, where YARS1 specifically stimulates the poly-ADP-ribosyltransferase activity of PARP1. This chain is Tyrosine--tRNA ligase, cytoplasmic (Yars1), found in Mus musculus (Mouse).